The sequence spans 171 residues: Small ribosomal subunit protein uS5 (171 aa).

The S5 DRBM domain occupies 13–76 (FLERLVAVNR…DQAKKNLVTI (64 aa)).

Belongs to the universal ribosomal protein uS5 family. As to quaternary structure, part of the 30S ribosomal subunit. Contacts proteins S4 and S8.

In terms of biological role, with S4 and S12 plays an important role in translational accuracy. Functionally, located at the back of the 30S subunit body where it stabilizes the conformation of the head with respect to the body. This is Small ribosomal subunit protein uS5 from Dichelobacter nodosus (strain VCS1703A).